Consider the following 980-residue polypeptide: Valine--tRNA ligase (980 aa).

Positions 43-53 (PNVTGTLHMGH) match the 'HIGH' region motif. The 'KMSKS' region motif lies at 586-590 (KMSKS). K589 contacts ATP. Residues 914–978 (LVDMDAERTR…QLTGLREQRA (65 aa)) adopt a coiled-coil conformation.

This sequence belongs to the class-I aminoacyl-tRNA synthetase family. ValS type 1 subfamily. As to quaternary structure, monomer.

The protein localises to the cytoplasm. It carries out the reaction tRNA(Val) + L-valine + ATP = L-valyl-tRNA(Val) + AMP + diphosphate. Its function is as follows. Catalyzes the attachment of valine to tRNA(Val). As ValRS can inadvertently accommodate and process structurally similar amino acids such as threonine, to avoid such errors, it has a 'posttransfer' editing activity that hydrolyzes mischarged Thr-tRNA(Val) in a tRNA-dependent manner. The polypeptide is Valine--tRNA ligase (Xanthomonas euvesicatoria pv. vesicatoria (strain 85-10) (Xanthomonas campestris pv. vesicatoria)).